The chain runs to 241 residues: Small ribosomal subunit protein uS2 (241 aa).

This sequence belongs to the universal ribosomal protein uS2 family.

This is Small ribosomal subunit protein uS2 from Yersinia pestis bv. Antiqua (strain Antiqua).